The following is a 318-amino-acid chain: MKKFTCVQDIGDLKSALAESFEIKKDRFKYVELGRNKTLLMIFFNSSLRTRLSTQKAALNLGMNVIVLDINQGAWKLETERGVIMDGDKPEHLLEAIPVMGCYCDIIGVRSFARFENREYDYNEVIINQFIQHSGRPVFSMEAATRHPLQSFADLITIEEYKKTARPKVVMTWAPHPRPLPQAVPNSFAEWMNATDYEFVITHPEGYELDPKFVGNARVEYDQMKAFEGADFIYAKNWAAYTGDNYGQILSTDRNWTVGDRQMAVTNNAYFMHCLPVRRNMIVTDDVIESPQSIVIPEAANREISATVVLKRLLENLP.

Carbamoyl phosphate is bound by residues 47–50, W75, and R110; that span reads SLRT. E142 contributes to the N(2)-succinyl-L-ornithine binding site. Residue 147 to 150 coordinates carbamoyl phosphate; the sequence is HPLQ. Positions 176 and 236 each coordinate N(2)-succinyl-L-ornithine. Position 274–275 (274–275) interacts with carbamoyl phosphate; the sequence is CL. Position 278 (R278) interacts with N(2)-succinyl-L-ornithine. R302 provides a ligand contact to carbamoyl phosphate.

It belongs to the aspartate/ornithine carbamoyltransferase superfamily. SOTCase family. In terms of assembly, homotrimer.

It carries out the reaction N(2)-succinyl-L-ornithine + carbamoyl phosphate = N(2)-succinyl-L-citrulline + phosphate + H(+). It participates in amino-acid biosynthesis; L-arginine biosynthesis. Functionally, catalyzes the transfer of the carbamoyl group from carbamoyl phosphate to the delta-amino group of N(2)-succinyl-L-ornithine to produce N(2)-succinyl-L-citrulline. Is essential for arginine biosynthesis. Has no activity with either L-ornithine or L-aspartate as substrate. Also has no detectable AOTCase activity, being unable to convert N(2)-acetyl-L-ornithine to N(2)-acetyl-L-citrulline. In Bacteroides fragilis (strain 638R), this protein is N-succinylornithine carbamoyltransferase.